The chain runs to 190 residues: Ribosome maturation factor RimM (190 aa).

The PRC barrel domain maps to 114–190; that stretch reads DDEYYWVDLI…CITVDWQPDY (77 aa).

The protein belongs to the RimM family. In terms of assembly, binds ribosomal protein uS19.

It localises to the cytoplasm. Its function is as follows. An accessory protein needed during the final step in the assembly of 30S ribosomal subunit, possibly for assembly of the head region. Essential for efficient processing of 16S rRNA. May be needed both before and after RbfA during the maturation of 16S rRNA. It has affinity for free ribosomal 30S subunits but not for 70S ribosomes. This Acidovorax sp. (strain JS42) protein is Ribosome maturation factor RimM.